Reading from the N-terminus, the 621-residue chain is MRIKVLNPEVVMKIAAGEVVSGPSSVVKELVENSLDAQADSITVEILDGGKSLIKVDDNGIGMEEEELELSILPHTTSKIFSIEDLYKLKTFGFRGEALSSISRVSRMKMTSKPPEKEVGTMLEILGGKIIEKKRVNSSNGTKIEIMDLFFNIPARRKFLKSDSAEGRYVTEIIEKFAFTNNINLTYIRDHKEIYKFSSDMDLITKCLKIYPELKRDDLIEIEHNDSLCKISGVISQPKVGRNNRTAQHFFVNNRYIKVASLYSVLETGYGEILEKSIHPYGIIFIEIPPDMVDVNVHPQKLEVKFTDEQMVASLLKKVVRESLKKNTHFTMEFINSNDTIDLNKKTSSFSVQNLYNKNESSQKVDFSQNPTNTDYFENTDEFFNNSEIEDLQEEQNHFDNSYKLYEPSKTFDFKGFEYQKNQTFTPVEKINSLEKLRILGIVAERYLVVEGEDKLLLVDFHAAHERYIYEILRENVYEKGGLTSDLLLTPVIIALDEVRKGIILENKDHLEKLGIKLEEDEKEIIVKGLPSLVKIDDAERLIFEIADDLRISNFDQQPNILDKNLATMACRAAVKTRDNPTGMETLLNTIFEKKLLTCPHGRPIMIQITFKTLDKYFGRI.

The protein belongs to the DNA mismatch repair MutL/HexB family.

Its function is as follows. This protein is involved in the repair of mismatches in DNA. It is required for dam-dependent methyl-directed DNA mismatch repair. May act as a 'molecular matchmaker', a protein that promotes the formation of a stable complex between two or more DNA-binding proteins in an ATP-dependent manner without itself being part of a final effector complex. This is DNA mismatch repair protein MutL from Petrotoga mobilis (strain DSM 10674 / SJ95).